The primary structure comprises 533 residues: uncharacterized protein (533 aa).

Composition is skewed to polar residues over residues 30–43 (SQQGQISESVVKNH), 79–91 (NAGTQSQNFTHLS), 231–247 (NVKSPVQQHRSFVSSSA), and 254–263 (GRQSNSPNSN). Disordered stretches follow at residues 30–92 (SQQG…HLSA) and 221–274 (SLSP…PGAS). A Phosphoserine modification is found at serine 336. The interval 475 to 510 (HPSLSNSAASPPVSSPGLRRSHIPVHEGLKHTRDGV) is disordered. Residues 476–490 (PSLSNSAASPPVSSP) are compositionally biased toward low complexity. Over residues 498–510 (PVHEGLKHTRDGV) the composition is skewed to basic and acidic residues.

It localises to the nucleus. This is an uncharacterized protein from Schizosaccharomyces pombe (strain 972 / ATCC 24843) (Fission yeast).